The following is a 234-amino-acid chain: MNNMFEPPKNYNEMLPKLHKATFLNTLIYCILLVIYEYIPLITLPTKYVPPIKDHESFINWALSFGILPCAFAIFAYLISGALDLHNNAAKLLRVRYLWDKHLIIKPLSRRAGVNRKLNKDEAHNVMSNLYYPEVRKIEDKHYIELFWNKVYYFWIFFEFSIIALISFLIIFFCKQMDIFHVEGSLLSLFFFVILSFSVSGIIFALTVKPRTESQVGKIPDDKIKEFFTKNNIN.

The next 4 membrane-spanning stretches (helical) occupy residues 22 to 42 (TFLN…IPLI), 59 to 79 (INWA…AYLI), 154 to 174 (FWIF…IFFC), and 186 to 206 (LLSL…IFAL).

Its subcellular location is the cell membrane. This is an uncharacterized protein from Escherichia coli (strain K12).